The following is a 345-amino-acid chain: G-protein coupled receptor str-33 (345 aa).

At 1–11 the chain is on the extracellular side; sequence MTVNLRDLSRT. The helical transmembrane segment at 12-32 threads the bilayer; sequence IAEFAFLTALVCNSLLIYLTA. Over 33–37 the chain is Cytoplasmic; it reads RRTKN. Residues 38 to 58 traverse the membrane as a helical segment; that stretch reads ITGAYKYMIILFALLGLIFSC. At 59–92 the chain is on the extracellular side; the sequence is TEMLARPFVHNFNASFVYFSLSNDLSEFKSLVQM. A glycan (N-linked (GlcNAc...) asparagine) is linked at asparagine 71. A helical membrane pass occupies residues 93–113; sequence LLVLYSGLYSSLISFVAVQFI. Topologically, residues 114 to 133 are cytoplasmic; it reads YRYMVLVNANLLESWFTGWK. The helical transmembrane segment at 134–154 threads the bilayer; sequence LVFWVFYVIFFGFAWSASVYF. At 155 to 204 the chain is on the extracellular side; it reads CLFPDTYSYNYIRTEFKDVYNIGVDRVAIFILVAYEKHPSSEEYKLRPAS. A helical transmembrane segment spans residues 205–225; the sequence is VIMIAGTISILVIQYSIMLFC. The Cytoplasmic portion of the chain corresponds to 226–258; it reads GASMHRQMNEKLKNFSPDNQRLQKQFFKTLLLQ. The chain crosses the membrane as a helical span at residues 259–279; that stretch reads ISVPTVLFHMPIFPVLLGPFF. At 280–288 the chain is on the extracellular side; that stretch reads NFEISAESG. A helical transmembrane segment spans residues 289–309; the sequence is IIYSLFSLYPPIDGLIIMTVV. Residues 310-345 are Cytoplasmic-facing; the sequence is TDYRIALTELFLGSHSGAQVEVIPVEVVSILNFSLL.

The protein belongs to the nematode receptor-like protein str family. Detected in ALM and PLM mechanosensory neurons and head neurons.

The protein localises to the cell membrane. Functionally, regulates egg-laying and locomotion. Likely to act upstream of goa-1 to suppress 5-hydroxytryptamine (5-HT) biosynthesis in hermaphrodite-specific neurons (HSNs) through inhibition of tph-1 transcription. The sequence is that of G-protein coupled receptor str-33 from Caenorhabditis elegans.